Reading from the N-terminus, the 246-residue chain is MQIDILSLFPEMFAGPLHESMIGNAIENDVINVDVTNFRDFTTDKHNHVDDYPYGGGAGMLLQPQPIFDALASVQEKHPAPGRVILLDPAGVQFNQHVAEDFAQEEHLTFICGHYEGYDERIRSLVTDEVSLGDYVLTGGELGAMVMIDATVRLLPGVLGNSESAPGDSFSSGLLEYPQYTRPADFRGMKVPDILLSGDHGKIDDWRLEQALKRTYERRPDMLTGLSLSGKAKQMLADIKADESEV.

S-adenosyl-L-methionine-binding positions include Gly-113 and 132–137; that span reads LGDYVL.

Belongs to the RNA methyltransferase TrmD family. In terms of assembly, homodimer.

The protein localises to the cytoplasm. The enzyme catalyses guanosine(37) in tRNA + S-adenosyl-L-methionine = N(1)-methylguanosine(37) in tRNA + S-adenosyl-L-homocysteine + H(+). Functionally, specifically methylates guanosine-37 in various tRNAs. The sequence is that of tRNA (guanine-N(1)-)-methyltransferase from Lactiplantibacillus plantarum (strain ATCC BAA-793 / NCIMB 8826 / WCFS1) (Lactobacillus plantarum).